A 2500-amino-acid chain; its full sequence is Non-reducing polyketide synthase atr1 (2500 aa).

An N-terminal acylcarrier protein transacylase domain (SAT) region spans residues 13–260 (VFSPQSKAPK…HNPENANLAL (248 aa)). The Ketosynthase family 3 (KS3) domain maps to 385 to 808 (TDAVAVVGMA…GSNSAVLLCQ (424 aa)). Active-site for beta-ketoacyl synthase activity residues include Cys-557, His-692, and His-731. Positions 908–1199 (MTFSGQSRQS…EFPERHTFLD (292 aa)) are malonyl-CoA:ACP transacylase (MAT) domain. Residue Ser-995 is the For acyl/malonyl transferase activity of the active site. The segment at 1286-1413 (PRLVEPRTKP…GDFGFTTQTQ (128 aa)) is N-terminal hotdog fold. The 299-residue stretch at 1286–1584 (PRLVEPRTKP…FTKLPITRLE (299 aa)) folds into the PKS/mFAS DH domain. Residues 1287–1583 (RLVEPRTKPS…QFTKLPITRL (297 aa)) form a product template (PT) domain region. The active-site Proton acceptor; for dehydratase activity is the His-1317. Positions 1433-1584 (SETLKSKRAY…FTKLPITRLE (152 aa)) are C-terminal hotdog fold. The active-site Proton donor; for dehydratase activity is the Asp-1495. Residues 1594 to 1649 (AHNTPILKSSQQDSIVSASSSSSTEHSDDDSEDDGSRSPSHSDTSVDSESEAPADN) form a disordered region. Over residues 1602–1617 (SSQQDSIVSASSSSST) the composition is skewed to low complexity. The 77-residue stretch at 1649–1725 (NGAAKKLKSL…RIVAPEMAAK (77 aa)) folds into the Carrier domain. An O-(pantetheine 4'-phosphoryl)serine modification is found at Ser-1683. The tract at residues 2164–2496 (KSYRIETMPY…YEFIFDVVGR (333 aa)) is thioesterase (TE) domain. Residues Ser-2285 and Asp-2434 each act as for thioesterase activity in the active site.

The catalysed reaction is 6 malonyl-CoA + 2 acetyl-CoA + 2 S-adenosyl-L-methionine + 3 H(+) = 4-O-demethylbarbatate + 2 S-adenosyl-L-homocysteine + 6 CO2 + 8 CoA + H2O. It functions in the pathway secondary metabolite biosynthesis; terpenoid biosynthesis. Its function is as follows. Non-reducing polyketide synthase; part of the gene cluster that mediates the biosynthesis of atranorin, a depside of polyketide origin that accumulates in the cortical or medullary layers of lichen thalli. The first step in the pathway is performed by the non-reducing polyketide synthase atr1 that produces 4-O-demethylbarbatic acid composed of two 3-methylorsellinic acid (3MOA) moieties from S-adenosyl-L-methionine (SAM), acetyl-CoA and malonyl-CoA units. The pathway continues with the actions of the cytochrome P450 monooygenase atr2 that catalizes the oxidation of c-9 and the O-methyltransferase atr3 that performs the methylation of the carboxyl group to yield atranorin, via the proatranorin II and III intermediates if atr2 acts first, or the proatranorin I intermediate if atr3 acts first. The sequence is that of Non-reducing polyketide synthase atr1 from Stereocaulon alpinum (Alpine snow lichen).